Here is a 344-residue protein sequence, read N- to C-terminus: N-acetyl-gamma-glutamyl-phosphate reductase (344 aa).

Cys150 is an active-site residue.

Belongs to the NAGSA dehydrogenase family. Type 1 subfamily.

It localises to the cytoplasm. The enzyme catalyses N-acetyl-L-glutamate 5-semialdehyde + phosphate + NADP(+) = N-acetyl-L-glutamyl 5-phosphate + NADPH + H(+). Its pathway is amino-acid biosynthesis; L-arginine biosynthesis; N(2)-acetyl-L-ornithine from L-glutamate: step 3/4. In terms of biological role, catalyzes the NADPH-dependent reduction of N-acetyl-5-glutamyl phosphate to yield N-acetyl-L-glutamate 5-semialdehyde. In Pseudomonas putida (strain ATCC 700007 / DSM 6899 / JCM 31910 / BCRC 17059 / LMG 24140 / F1), this protein is N-acetyl-gamma-glutamyl-phosphate reductase.